Consider the following 613-residue polypeptide: Acetylcholinesterase (613 aa).

Residues M1 to A30 form the signal peptide. Residue N91 is glycosylated (N-linked (GlcNAc...) asparagine). A disulfide bond links C99 and C126. S233 acts as the Acyl-ester intermediate in catalysis. The cysteines at positions 287 and 302 are disulfide-linked. N295 is a glycosylation site (N-linked (GlcNAc...) asparagine). The active-site Charge relay system is E364. A glycan (N-linked (GlcNAc...) asparagine) is linked at N380. A disulfide bond links C439 and C559. H477 serves as the catalytic Charge relay system. N494 carries N-linked (GlcNAc...) asparagine glycosylation.

The protein belongs to the type-B carboxylesterase/lipase family. As to quaternary structure, interacts with PRIMA1. The interaction with PRIMA1 is required to anchor it to the basal lamina of cells and organize into tetramers. Isoform H generates GPI-anchored dimers; disulfide linked. Isoform T generates multiple structures, ranging from monomers and dimers to collagen-tailed and hydrophobic-tailed forms, in which catalytic tetramers are associated with anchoring proteins that attach them to the basal lamina or to cell membranes. In the collagen-tailed forms, isoform T subunits are associated with a specific collagen, COLQ, which triggers the formation of isoform T tetramers, from monomers and dimers.

Its subcellular location is the synapse. The protein resides in the secreted. The protein localises to the cell membrane. It carries out the reaction acetylcholine + H2O = choline + acetate + H(+). Functionally, terminates signal transduction at the neuromuscular junction by rapid hydrolysis of the acetylcholine released into the synaptic cleft. This Bos taurus (Bovine) protein is Acetylcholinesterase (ACHE).